The sequence spans 152 residues: MISIDVQHATQFEDLPSLSNIEQWVETALQFIVTDKNKSALTIRFIDKEESTELNEHYRHKKGPTNVLSFPDEPIPGFPSESFGDLAICAPLVAEEAHAQHKTTEAHFAHLITHGFLHLLGYDHVENEDAEEMENLEIKILSQLGFENPYEE.

Zn(2+)-binding residues include histidine 114, histidine 118, and histidine 124.

This sequence belongs to the endoribonuclease YbeY family. Zn(2+) serves as cofactor.

Its subcellular location is the cytoplasm. In terms of biological role, single strand-specific metallo-endoribonuclease involved in late-stage 70S ribosome quality control and in maturation of the 3' terminus of the 16S rRNA. The chain is Endoribonuclease YbeY from Coxiella burnetii (strain CbuK_Q154) (Coxiella burnetii (strain Q154)).